The sequence spans 471 residues: Ribulose bisphosphate carboxylase large chain (471 aa).

Substrate contacts are provided by Asn-115 and Thr-165. The Proton acceptor role is filled by Lys-167. Residue Lys-169 participates in substrate binding. Positions 193, 195, and 196 each coordinate Mg(2+). Lys-193 carries the post-translational modification N6-carboxylysine. Residue His-286 is the Proton acceptor of the active site. 3 residues coordinate substrate: Arg-287, His-319, and Ser-371.

It belongs to the RuBisCO large chain family. Type I subfamily. As to quaternary structure, heterohexadecamer of 8 large chains and 8 small chains. It depends on Mg(2+) as a cofactor.

The protein resides in the carboxysome. It carries out the reaction 2 (2R)-3-phosphoglycerate + 2 H(+) = D-ribulose 1,5-bisphosphate + CO2 + H2O. The enzyme catalyses D-ribulose 1,5-bisphosphate + O2 = 2-phosphoglycolate + (2R)-3-phosphoglycerate + 2 H(+). Its function is as follows. RuBisCO catalyzes two reactions: the carboxylation of D-ribulose 1,5-bisphosphate, the primary event in carbon dioxide fixation, as well as the oxidative fragmentation of the pentose substrate in the photorespiration process. Both reactions occur simultaneously and in competition at the same active site. This chain is Ribulose bisphosphate carboxylase large chain, found in Synechococcus sp. (strain CC9605).